The following is a 308-amino-acid chain: MSPRVLILGLGHWGQTLAYLFEQRGCTVSSWGRSQGALSAALFQDIHLLVSALPIKAVREVAAQVTRLHPPLGIILVSATKGLESETFATAADIWQTYCPHHDLVVLSGPNLASEIQQGLPAAAVVGGNLAATKQVQDCLGSPTFRLYSNEDRRGVEMGGIFKNVIAIACGVNDGLGLGVNARSALITRGLVEMVRVGTHWGGQVETFYGLSGLGDLLATCTSALSRNYQVGWHLAQGKSLSQALALTKGTAEGVNTARVLCTYAQQHQLDIPITAMVNAVLCGSLTPQAALHCLLERPFKPEVIPGQ.

Trp-13, Arg-33, and Lys-81 together coordinate NADPH. Lys-81 and Gly-109 together coordinate sn-glycerol 3-phosphate. NADPH is bound at residue Ala-113. Residues Lys-163, Asp-216, Ser-226, Arg-227, and Asn-228 each coordinate sn-glycerol 3-phosphate. The active-site Proton acceptor is the Lys-163. Position 227 (Arg-227) interacts with NADPH. Residue Glu-253 coordinates NADPH.

This sequence belongs to the NAD-dependent glycerol-3-phosphate dehydrogenase family.

It is found in the cytoplasm. It catalyses the reaction sn-glycerol 3-phosphate + NAD(+) = dihydroxyacetone phosphate + NADH + H(+). The enzyme catalyses sn-glycerol 3-phosphate + NADP(+) = dihydroxyacetone phosphate + NADPH + H(+). Its pathway is membrane lipid metabolism; glycerophospholipid metabolism. Its function is as follows. Catalyzes the reduction of the glycolytic intermediate dihydroxyacetone phosphate (DHAP) to sn-glycerol 3-phosphate (G3P), the key precursor for phospholipid synthesis. This is Glycerol-3-phosphate dehydrogenase [NAD(P)+] from Thermosynechococcus vestitus (strain NIES-2133 / IAM M-273 / BP-1).